The primary structure comprises 272 residues: Ethanolamine ammonia-lyase small subunit (272 aa).

Residues Val161, Glu182, and Cys211 each contribute to the adenosylcob(III)alamin site.

Belongs to the EutC family. The basic unit is a heterodimer which dimerizes to form tetramers. The heterotetramers trimerize; 6 large subunits form a core ring with 6 small subunits projecting outwards. Adenosylcob(III)alamin serves as cofactor.

Its subcellular location is the bacterial microcompartment. The enzyme catalyses ethanolamine = acetaldehyde + NH4(+). It participates in amine and polyamine degradation; ethanolamine degradation. In terms of biological role, catalyzes the deamination of various vicinal amino-alcohols to oxo compounds. Allows this organism to utilize ethanolamine as the sole source of nitrogen and carbon in the presence of external vitamin B12. This is Ethanolamine ammonia-lyase small subunit from Pseudomonas putida (strain ATCC 700007 / DSM 6899 / JCM 31910 / BCRC 17059 / LMG 24140 / F1).